We begin with the raw amino-acid sequence, 139 residues long: Large-conductance mechanosensitive channel (139 aa).

The next 2 helical transmembrane spans lie at 16–36 (VIDL…VDSL) and 83–103 (GQFI…FVAV).

It belongs to the MscL family. In terms of assembly, homopentamer.

Its subcellular location is the cell inner membrane. Its function is as follows. Channel that opens in response to stretch forces in the membrane lipid bilayer. May participate in the regulation of osmotic pressure changes within the cell. This chain is Large-conductance mechanosensitive channel, found in Aromatoleum aromaticum (strain DSM 19018 / LMG 30748 / EbN1) (Azoarcus sp. (strain EbN1)).